The chain runs to 616 residues: MPVAQKLPHLPESPGVYLWKDVEGQVLYVGKAKRLRSRVRSYWAQEHESSPKTRAMVRKVRDLETIVVPSEAHALILEATLIKEYHPRFNIALRDDKSYPYIRVTVNEPFPRVMVTRRLLDDGARYFGPYTDVGAMRRALNVVKRIFTVRSCHYALPGEAPERPCLDYSIKRCKAPCVGYQSREDYRAMIDEVVWFLDGRTSDVMHHVRERMLDASERLDFERAAELRDALAHLEKMESPSVVLEVEGGDRDVVGYARDGEDACVAVMRIRGGKLLARDHRLLEHAEDEEDGAVLGACLAQWYRTAEARAGELLVPFDFEDRESLEASLDGTHIRVPQRGPRRALVDLADQNARHLLEEFKLAALEADERAVDPVYELQRELGLPRLPRSLVCFDISHAQGTDVVASAVFFENGRPKRSEYRKFKIKVFEGNDDFRSMHEVVTRYFRRRLDEEKPLPDLAVIDGGKGQLGAARAALDELGAPQIGLISLAKREEEIFQYGRPDPVRLPRRSPALRMLQQARDEAHRFAITFQRQKRAARTITSELLKIPGVGPTKRRALLHTFGSVQGVREASVEQIAAIPGFGAASARRLLEALGVAVPDVSAPTIDSPSDPPLS.

The GIY-YIG domain maps to 12-91 (ESPGVYLWKD…IKEYHPRFNI (80 aa)). One can recognise a UVR domain in the interval 202–237 (SDVMHHVRERMLDASERLDFERAAELRDALAHLEKM).

It belongs to the UvrC family. As to quaternary structure, interacts with UvrB in an incision complex.

The protein resides in the cytoplasm. In terms of biological role, the UvrABC repair system catalyzes the recognition and processing of DNA lesions. UvrC both incises the 5' and 3' sides of the lesion. The N-terminal half is responsible for the 3' incision and the C-terminal half is responsible for the 5' incision. This chain is UvrABC system protein C, found in Gemmatimonas aurantiaca (strain DSM 14586 / JCM 11422 / NBRC 100505 / T-27).